Reading from the N-terminus, the 188-residue chain is Elongation factor P (188 aa).

Lysine 34 carries the N6-(3,6-diaminohexanoyl)-5-hydroxylysine modification.

The protein belongs to the elongation factor P family. Post-translationally, may be beta-lysylated on the epsilon-amino group of Lys-34 by the combined action of EpmA and EpmB, and then hydroxylated on the C5 position of the same residue by EpmC (if this protein is present). Lysylation is critical for the stimulatory effect of EF-P on peptide-bond formation. The lysylation moiety may extend toward the peptidyltransferase center and stabilize the terminal 3-CCA end of the tRNA. Hydroxylation of the C5 position on Lys-34 may allow additional potential stabilizing hydrogen-bond interactions with the P-tRNA.

The protein localises to the cytoplasm. It participates in protein biosynthesis; polypeptide chain elongation. Functionally, involved in peptide bond synthesis. Alleviates ribosome stalling that occurs when 3 or more consecutive Pro residues or the sequence PPG is present in a protein, possibly by augmenting the peptidyl transferase activity of the ribosome. Modification of Lys-34 is required for alleviation. The sequence is that of Elongation factor P from Yersinia pseudotuberculosis serotype O:1b (strain IP 31758).